Consider the following 250-residue polypeptide: ATP synthase subunit a (250 aa).

6 helical membrane passes run valine 25–leucine 45, valine 84–leucine 104, isoleucine 115–tyrosine 135, phenylalanine 141–isoleucine 161, alanine 187–alanine 209, and glutamate 223–asparagine 243.

Belongs to the ATPase A chain family. In terms of assembly, F-type ATPases have 2 components, CF(1) - the catalytic core - and CF(0) - the membrane proton channel. CF(1) has five subunits: alpha(3), beta(3), gamma(1), delta(1), epsilon(1). CF(0) has three main subunits: a(1), b(2) and c(9-12). The alpha and beta chains form an alternating ring which encloses part of the gamma chain. CF(1) is attached to CF(0) by a central stalk formed by the gamma and epsilon chains, while a peripheral stalk is formed by the delta and b chains.

It localises to the cell inner membrane. Its function is as follows. Key component of the proton channel; it plays a direct role in the translocation of protons across the membrane. The protein is ATP synthase subunit a of Azorhizobium caulinodans (strain ATCC 43989 / DSM 5975 / JCM 20966 / LMG 6465 / NBRC 14845 / NCIMB 13405 / ORS 571).